A 164-amino-acid chain; its full sequence is MSGPALTHIDSAGEASMVDVGDKAETVRVAVAEGFVRMKPETLALIRQGNAKKGDVIATARLAGIMAAKQTSSLIPLCHPLMLTKVSVDITPDDALPGLRVEAMAKLTGRTGVEMEALTAVSVACLTIYDMAKAADREMEIGGVRLVSKSGGRSGDYHRAGEMR.

Substrate is bound by residues 77-79 and 115-116; these read LCH and ME. Residue D130 is part of the active site.

This sequence belongs to the MoaC family. Homohexamer; trimer of dimers.

It catalyses the reaction (8S)-3',8-cyclo-7,8-dihydroguanosine 5'-triphosphate = cyclic pyranopterin phosphate + diphosphate. It functions in the pathway cofactor biosynthesis; molybdopterin biosynthesis. Functionally, catalyzes the conversion of (8S)-3',8-cyclo-7,8-dihydroguanosine 5'-triphosphate to cyclic pyranopterin monophosphate (cPMP). The polypeptide is Cyclic pyranopterin monophosphate synthase (Rhizobium meliloti (strain 1021) (Ensifer meliloti)).